A 336-amino-acid polypeptide reads, in one-letter code: Deoxyhypusine hydroxylase (336 aa).

HEAT-like PBS-type repeat units lie at residues 68–94 (LKHE…VVQD) and 101–127 (CRHE…LRDN). Fe cation-binding residues include histidine 70, glutamate 71, histidine 103, and glutamate 104. The interval 158-179 (LKPSDFTSIDPAPPMPLTAKEP) is disordered. HEAT-like PBS-type repeat units lie at residues 235 to 261 (FRHE…TLSD) and 268 to 295 (VRHE…FLND). Positions 237, 238, 270, and 271 each coordinate Fe cation.

Belongs to the deoxyhypusine hydroxylase family. The cofactor is Fe(2+).

The protein localises to the cytoplasm. It localises to the nucleus. It carries out the reaction [eIF5A protein]-deoxyhypusine + AH2 + O2 = [eIF5A protein]-hypusine + A + H2O. Its pathway is protein modification; eIF5A hypusination. In terms of biological role, catalyzes the hydroxylation of the N(6)-(4-aminobutyl)-L-lysine intermediate to form hypusine, an essential post-translational modification only found in mature eIF-5A factor. The protein is Deoxyhypusine hydroxylase (lia1) of Emericella nidulans (strain FGSC A4 / ATCC 38163 / CBS 112.46 / NRRL 194 / M139) (Aspergillus nidulans).